Consider the following 1006-residue polypeptide: Probable beta-galactosidase A (1006 aa).

An N-terminal signal peptide occupies residues methionine 1 to glycine 18. Substrate contacts are provided by tyrosine 96, asparagine 140, alanine 141, and glutamate 142. Asparagine 156 carries N-linked (GlcNAc...) asparagine glycosylation. Position 199 (asparagine 199) interacts with substrate. Glutamate 200 functions as the Proton donor in the catalytic mechanism. Cysteine 205 and cysteine 206 are joined by a disulfide. Residue tyrosine 260 coordinates substrate. Cysteine 266 and cysteine 315 are joined by a disulfide. Glutamate 298 functions as the Nucleophile in the catalytic mechanism. Substrate is bound at residue tyrosine 364. Asparagine 373, asparagine 402, asparagine 422, asparagine 622, asparagine 760, asparagine 777, and asparagine 914 each carry an N-linked (GlcNAc...) asparagine glycan.

This sequence belongs to the glycosyl hydrolase 35 family.

The protein resides in the secreted. It catalyses the reaction Hydrolysis of terminal non-reducing beta-D-galactose residues in beta-D-galactosides.. In terms of biological role, cleaves beta-linked terminal galactosyl residues from gangliosides, glycoproteins, and glycosaminoglycans. The polypeptide is Probable beta-galactosidase A (lacA) (Aspergillus fumigatus (strain ATCC MYA-4609 / CBS 101355 / FGSC A1100 / Af293) (Neosartorya fumigata)).